The primary structure comprises 115 residues: MEDRIKISILMDYYRELLTEKQKYVMELYFNQDLSLAEISELTNTSRQAIYDIIKRCNKLLVDYEKKLNLARKNKELIKAKQIIIEKINDLEYSNNKNDFKNSLEDIKNTIVQYI.

This sequence belongs to the UPF0122 family.

In terms of biological role, might take part in the signal recognition particle (SRP) pathway. This is inferred from the conservation of its genetic proximity to ftsY/ffh. May be a regulatory protein. This chain is UPF0122 protein NT01CX_2214, found in Clostridium novyi (strain NT).